We begin with the raw amino-acid sequence, 1317 residues long: Nucleoporin NUP145 (1317 aa).

Over residues 1–16 the composition is skewed to polar residues; that stretch reads MFNKSVNSGFTFGNQN. Residues 1–36 form a disordered region; the sequence is MFNKSVNSGFTFGNQNTSTPTSTPAQPSSSLQFPQK. Residues 12 to 13 form an FG 1 repeat; the sequence is FG. Over residues 17-30 the composition is skewed to low complexity; the sequence is TSTPTSTPAQPSSS. The GLFG 1 repeat unit spans residues 39-42; it reads GLFG. One copy of the FG 2 repeat lies at 79-80; the sequence is FG. The stretch at 89 to 92 is one GLFG 2 repeat; sequence GLFG. The FG 3 repeat unit spans residues 106 to 107; the sequence is FG. Residues 133 to 165 form a disordered region; sequence QNGGLFGNSNNNNITSTTQNGGLFGKPTTTPAG. GLFG repeat units lie at residues 136 to 139, 154 to 157, 168 to 171, and 181 to 184; these read GLFG. Residues 139 to 164 show a composition bias toward low complexity; sequence GNSNNNNITSTTQNGGLFGKPTTTPA. The GLFG 7; approximate repeat unit spans residues 193–196; it reads GIFG. A GLFG 8 repeat occupies 206-209; that stretch reads GLFG. The segment at 249 to 278 is disordered; it reads TSSLSDVNGKSDAEPKPIENRRTYSFSSSV. The span at 257–270 shows a compositional bias: basic and acidic residues; it reads GKSDAEPKPIENRR. Phosphoserine is present on S273. Positions 369 to 385 match the Bipartite nuclear localization signal motif; it reads RKLKIDSNRSAAKKLKL. The segment at 390–450 is disordered; that stretch reads PAITKKHMQD…NLNKQDGENT (61 aa). Residues 398–523 are required for autocatalytic cleavage; the sequence is QDEQDSSENE…FGKIVIFRSS (126 aa). S403, S404, and S414 each carry phosphoserine. A compositionally biased stretch (basic and acidic residues) spans 418–427; sequence IDRKENRDNN. Residues 428 to 444 are compositionally biased toward polar residues; it reads LDNTYLNGKEQSNNLNK. The region spanning 458-605 is the Peptidase S59 domain; the sequence is SFGYWCSPSP…GTWTFKVNHF (148 aa). Residues 460-604 form a nucleoporin RNA-binding motif (NRM) region; it reads GYWCSPSPEQ…GGTWTFKVNH (145 aa). Residues S667, S679, and S689 each carry the phosphoserine modification. The residue at position 751 (T751) is a Phosphothreonine.

It belongs to the nucleoporin GLFG family. Component of the nuclear pore complex (NPC). NPC constitutes the exclusive means of nucleocytoplasmic transport. NPCs allow the passive diffusion of ions and small molecules and the active, nuclear transport receptor-mediated bidirectional transport of macromolecules such as proteins, RNAs, ribonucleoparticles (RNPs), and ribosomal subunits across the nuclear envelope. Due to its 8-fold rotational symmetry, all subunits are present with 8 copies or multiples thereof. NUP145C is part of the heptameric 0.5 MDa autoassembling NUP84 NPC subcomplex (NUP84, NUP85, NUP120, NUP133, NUP145C, SEC13 and SEH1). NUP145N may bind homomeric RNA and interacts through its FG repeats with karyopherins. Interacts with MLP1 and MLP2. Post-translationally, NUP145 is autocatalytically cleaved in NUP145N and NUP145C.

It is found in the nucleus. Its subcellular location is the nuclear pore complex. The protein resides in the nucleus membrane. In terms of biological role, functions as a component of the nuclear pore complex (NPC). NPC components, collectively referred to as nucleoporins (NUPs), can play the role of both NPC structural components and of docking or interaction partners for transiently associated nuclear transport factors. Active directional transport is assured by both, a Phe-Gly (FG) repeat affinity gradient for these transport factors across the NPC and a transport cofactor concentration gradient across the nuclear envelope (GSP1 and GSP2 GTPases associated predominantly with GTP in the nucleus, with GDP in the cytoplasm). NUP145 is autocatalytically cleaved in vivo in 2 polypeptides which assume different functions in the NPC. NUP145N as one of the FG repeat nucleoporins participates in karyopherin interactions and contains part of the autocatalytic cleavage activity. NUP145C as part of the NUP84 complex is involved in nuclear poly(A)+ RNA and tRNA export. It is also required for normal NPC distribution (probably through interactions with MLP1 and MLP2) and NPC assembly, as well as for normal nuclear envelope organization. This Saccharomyces cerevisiae (strain ATCC 204508 / S288c) (Baker's yeast) protein is Nucleoporin NUP145 (NUP145).